Reading from the N-terminus, the 1137-residue chain is Dendrite extension defective protein 1 (1137 aa).

The first 41 residues, 1-41 (MLAHTHRINKCLYGQNQMRNRHALLGALPPIFLLLLPLISC), serve as a signal peptide directing secretion. The Extracellular segment spans residues 43 to 1005 (KFDPERIAAR…HAEEQSPRLA (963 aa)). Positions 163 to 302 (PFWNRNDLRN…GEWMFELSEL (140 aa)) constitute an NIDO 1 domain. Residues Asn240 and Asn416 are each glycosylated (N-linked (GlcNAc...) asparagine). An EGF-like; calcium-binding domain is found at 409-450 (DVDECKTNSTICHKNAICTNTPGRYFCMCKEGFSGDGQNDCS). Disulfide bonds link Cys413–Cys426, Cys420–Cys435, and Cys437–Cys449. The 141-residue stretch at 519-659 (PFFGPIDLSR…GTWLYRIDKA (141 aa)) folds into the NIDO 2 domain. Residue Asn571 is glycosylated (N-linked (GlcNAc...) asparagine). The span at 738 to 749 (IGNQQRQQTTKA) shows a compositional bias: polar residues. Disordered stretches follow at residues 738–765 (IGNQ…HRPI), 795–856 (FRPN…PFEA), 878–897 (QTTK…EDLS), 906–933 (TEED…TKAH), and 978–998 (NSQP…GHAE). Residue Asn756 is glycosylated (N-linked (GlcNAc...) asparagine). Positions 798-809 (NQRNGVQKSTQR) are enriched in polar residues. Basic and acidic residues predominate over residues 819–833 (PLKEEATTSVPREKT). A compositionally biased stretch (acidic residues) spans 906–915 (TEEDEEEAEI). The span at 916–933 (STETTTEMSSTTTTTKAH) shows a compositional bias: low complexity. Positions 978–992 (NSQPPKQRNDNQPTV) are enriched in polar residues. Residues 1006-1026 (ILLPVMIILAWLVILVCIGAV) traverse the membrane as a helical segment. Residues 1027–1037 (VCCKRRNSRES) are Cytoplasmic-facing. The segment at 1106–1125 (ARLSTQERQSPPSFVNNGYT) is disordered.

May be proteolytically cleaved and secreted.

It is found in the membrane. Its subcellular location is the cell projection. The protein resides in the dendrite. The protein localises to the secreted. Along with dyf-7, enables neurite growth and maintenance by anchoring amphid dendritic tips during neuron cell body migration in embryonic and larval development. Promotes seam cell remodeling during the dauer phase. Plays a role in positively regulating locomotion during the dauer phase. The protein is Dendrite extension defective protein 1 of Caenorhabditis elegans.